The chain runs to 207 residues: 2,3-bisphosphoglycerate-dependent phosphoglycerate mutase (207 aa).

Residues 10-17 (RHGQSEWN), 23-24 (TG), arginine 62, 89-92 (ERDY), lysine 100, 116-117 (RR), and 160-161 (GN) contribute to the substrate site. Residue histidine 11 is the Tele-phosphohistidine intermediate of the active site. The Proton donor/acceptor role is filled by glutamate 89.

It belongs to the phosphoglycerate mutase family. BPG-dependent PGAM subfamily. As to quaternary structure, homodimer.

It catalyses the reaction (2R)-2-phosphoglycerate = (2R)-3-phosphoglycerate. It functions in the pathway carbohydrate degradation; glycolysis; pyruvate from D-glyceraldehyde 3-phosphate: step 3/5. In terms of biological role, catalyzes the interconversion of 2-phosphoglycerate and 3-phosphoglycerate. The protein is 2,3-bisphosphoglycerate-dependent phosphoglycerate mutase of Afipia carboxidovorans (strain ATCC 49405 / DSM 1227 / KCTC 32145 / OM5) (Oligotropha carboxidovorans).